The sequence spans 172 residues: 3-hydroxydecanoyl-[acyl-carrier-protein] dehydratase (172 aa).

H71 is a catalytic residue.

Belongs to the thioester dehydratase family. FabA subfamily. As to quaternary structure, homodimer.

Its subcellular location is the cytoplasm. It catalyses the reaction a (3R)-hydroxyacyl-[ACP] = a (2E)-enoyl-[ACP] + H2O. The catalysed reaction is (3R)-hydroxydecanoyl-[ACP] = (2E)-decenoyl-[ACP] + H2O. It carries out the reaction (2E)-decenoyl-[ACP] = (3Z)-decenoyl-[ACP]. It functions in the pathway lipid metabolism; fatty acid biosynthesis. Necessary for the introduction of cis unsaturation into fatty acids. Catalyzes the dehydration of (3R)-3-hydroxydecanoyl-ACP to E-(2)-decenoyl-ACP and then its isomerization to Z-(3)-decenoyl-ACP. Can catalyze the dehydratase reaction for beta-hydroxyacyl-ACPs with saturated chain lengths up to 16:0, being most active on intermediate chain length. The polypeptide is 3-hydroxydecanoyl-[acyl-carrier-protein] dehydratase (Brucella ovis (strain ATCC 25840 / 63/290 / NCTC 10512)).